Consider the following 336-residue polypeptide: Phospho-N-acetylmuramoyl-pentapeptide-transferase (336 aa).

10 helical membrane-spanning segments follow: residues 3–23 (LTLIAAIISFMVSAFTMPYFI), 53–73 (GGTVFLLVATAVSLLVSLFSI), 78–98 (SLALISGILSIVVIYGIIGFL), 118–138 (LALQLAGGLMFYFLHVSPSGI), 143–163 (VFGYQLSLGIFYLFFVLFWVV), 174–194 (GIDGLASISVVISLVTYGVIA), 200–220 (FDVLLLIGAMIGALLGFFCFN), 226–246 (VFMGDVGSLALGAMLAAISIA), 251–271 (WTLLIIGIVYVLETSSVMLQV), and 316–336 (AFLWGVGSLASLLVLAILYVF).

Belongs to the glycosyltransferase 4 family. MraY subfamily. It depends on Mg(2+) as a cofactor.

Its subcellular location is the cell membrane. It catalyses the reaction UDP-N-acetyl-alpha-D-muramoyl-L-alanyl-gamma-D-glutamyl-L-lysyl-D-alanyl-D-alanine + di-trans,octa-cis-undecaprenyl phosphate = Mur2Ac(oyl-L-Ala-gamma-D-Glu-L-Lys-D-Ala-D-Ala)-di-trans,octa-cis-undecaprenyl diphosphate + UMP. It functions in the pathway cell wall biogenesis; peptidoglycan biosynthesis. In terms of biological role, catalyzes the initial step of the lipid cycle reactions in the biosynthesis of the cell wall peptidoglycan: transfers peptidoglycan precursor phospho-MurNAc-pentapeptide from UDP-MurNAc-pentapeptide onto the lipid carrier undecaprenyl phosphate, yielding undecaprenyl-pyrophosphoryl-MurNAc-pentapeptide, known as lipid I. This is Phospho-N-acetylmuramoyl-pentapeptide-transferase from Streptococcus pyogenes serotype M3 (strain ATCC BAA-595 / MGAS315).